The chain runs to 432 residues: Alkaline protease secretion protein AprE (432 aa).

Topologically, residues 1–14 are cytoplasmic; it reads MTRTVKRDENAYAR. The chain crosses the membrane as a helical span at residues 15–36; it reads LGWLLVLFGFGGALLWAAFAPL. Topologically, residues 37-432 are periplasmic; that stretch reads DQGVAVPATV…DRAHVALAEN (396 aa).

It belongs to the membrane fusion protein (MFP) (TC 8.A.1) family.

It is found in the cell inner membrane. Its function is as follows. Involved in the secretion of alkaline protease. The sequence is that of Alkaline protease secretion protein AprE (aprE) from Pseudomonas aeruginosa (strain ATCC 15692 / DSM 22644 / CIP 104116 / JCM 14847 / LMG 12228 / 1C / PRS 101 / PAO1).